The sequence spans 934 residues: Serine/threonine-protein kinase KIPK1 (934 aa).

Disordered regions lie at residues 20 to 40 (LPKH…KDLV), 70 to 113 (RLMS…RFVG), 189 to 227 (PLMP…FGLQ), 305 to 343 (SSSA…RPKQ), 395 to 438 (SIDD…SCNV), and 466 to 493 (EKET…DYSR). Composition is skewed to polar residues over residues 82–94 (SASA…TSPS) and 212–227 (NPIS…FGLQ). Residues 395–421 (SIDDNPPSYTSSHNPKICTDSLSSVSN) are compositionally biased toward polar residues. The region spanning 538 to 879 (FNLLKKLGCG…SVEIKRHPFF (342 aa)) is the Protein kinase domain. ATP contacts are provided by residues 544–552 (LGCGDIGTV) and lysine 567. The active-site Proton acceptor is the aspartate 663. Residues 738–773 (SSNQQQGRKPKRGDHLSKTQQHLSRSLPQLVAEPTE) form a disordered region. The segment covering 755-764 (KTQQHLSRSL) has biased composition (polar residues).

The protein belongs to the protein kinase superfamily. Ser/Thr protein kinase family. Interacts with KCBP. Interacts with PERK8, PERK9, PERK10 and PERK13. Post-translationally, autophosphorylated. In terms of tissue distribution, expressed in roots, cauline leaves, flowers and siliques.

Its subcellular location is the cytoplasm. The protein localises to the nucleus. It catalyses the reaction L-seryl-[protein] + ATP = O-phospho-L-seryl-[protein] + ADP + H(+). The catalysed reaction is L-threonyl-[protein] + ATP = O-phospho-L-threonyl-[protein] + ADP + H(+). In terms of biological role, could be involved in the negative regulation of root growth. This Arabidopsis thaliana (Mouse-ear cress) protein is Serine/threonine-protein kinase KIPK1.